The following is a 392-amino-acid chain: L-rhamnonate dehydratase (392 aa).

Residues histidine 22 and arginine 48 each coordinate substrate. The Mg(2+) site is built by aspartate 214, glutamate 240, and glutamate 268. Histidine 318 acts as the Proton acceptor in catalysis. A substrate-binding site is contributed by glutamate 338.

This sequence belongs to the mandelate racemase/muconate lactonizing enzyme family. RhamD subfamily. In terms of assembly, homooctamer; tetramer of dimers. It depends on Mg(2+) as a cofactor.

The catalysed reaction is L-rhamnonate = 2-dehydro-3-deoxy-L-rhamnonate + H2O. In terms of biological role, catalyzes the dehydration of L-rhamnonate to 2-keto-3-deoxy-L-rhamnonate (KDR). The protein is L-rhamnonate dehydratase of Paraburkholderia phytofirmans (strain DSM 17436 / LMG 22146 / PsJN) (Burkholderia phytofirmans).